The following is a 500-amino-acid chain: Probable cytosol aminopeptidase (500 aa).

2 residues coordinate Mn(2+): lysine 264 and aspartate 269. Lysine 276 is a catalytic residue. Mn(2+) is bound by residues aspartate 287, aspartate 346, and glutamate 348. The active site involves arginine 350.

The protein belongs to the peptidase M17 family. Mn(2+) is required as a cofactor.

Its subcellular location is the cytoplasm. The catalysed reaction is Release of an N-terminal amino acid, Xaa-|-Yaa-, in which Xaa is preferably Leu, but may be other amino acids including Pro although not Arg or Lys, and Yaa may be Pro. Amino acid amides and methyl esters are also readily hydrolyzed, but rates on arylamides are exceedingly low.. The enzyme catalyses Release of an N-terminal amino acid, preferentially leucine, but not glutamic or aspartic acids.. In terms of biological role, presumably involved in the processing and regular turnover of intracellular proteins. Catalyzes the removal of unsubstituted N-terminal amino acids from various peptides. The sequence is that of Probable cytosol aminopeptidase from Nitrobacter hamburgensis (strain DSM 10229 / NCIMB 13809 / X14).